Reading from the N-terminus, the 424-residue chain is Arginine biosynthesis bifunctional protein ArgJ (424 aa).

Substrate is bound by residues Thr172, Lys198, Thr209, Glu296, Asn419, and Ser424. Catalysis depends on Thr209, which acts as the Nucleophile.

The protein belongs to the ArgJ family. As to quaternary structure, heterotetramer of two alpha and two beta chains.

It is found in the cytoplasm. It catalyses the reaction N(2)-acetyl-L-ornithine + L-glutamate = N-acetyl-L-glutamate + L-ornithine. The enzyme catalyses L-glutamate + acetyl-CoA = N-acetyl-L-glutamate + CoA + H(+). The protein operates within amino-acid biosynthesis; L-arginine biosynthesis; L-ornithine and N-acetyl-L-glutamate from L-glutamate and N(2)-acetyl-L-ornithine (cyclic): step 1/1. It functions in the pathway amino-acid biosynthesis; L-arginine biosynthesis; N(2)-acetyl-L-ornithine from L-glutamate: step 1/4. Its function is as follows. Catalyzes two activities which are involved in the cyclic version of arginine biosynthesis: the synthesis of N-acetylglutamate from glutamate and acetyl-CoA as the acetyl donor, and of ornithine by transacetylation between N(2)-acetylornithine and glutamate. In Gluconobacter oxydans (strain 621H) (Gluconobacter suboxydans), this protein is Arginine biosynthesis bifunctional protein ArgJ.